The following is a 338-amino-acid chain: Glutaminase (338 aa).

Residues Ser-80, Asn-130, Glu-174, Asn-181, Tyr-205, Tyr-257, and Val-275 each coordinate substrate.

It belongs to the glutaminase family. Homotetramer.

The enzyme catalyses L-glutamine + H2O = L-glutamate + NH4(+). The protein is Glutaminase of Microcystis aeruginosa (strain NIES-843 / IAM M-2473).